Here is a 472-residue protein sequence, read N- to C-terminus: Siroheme synthase 1 (472 aa).

The tract at residues 1–203 is precorrin-2 dehydrogenase /sirohydrochlorin ferrochelatase; that stretch reads MDYLPLFADL…GQLAQAEEEL (203 aa). Residues 22 to 23 and 43 to 44 each bind NAD(+); these read EV and QT. S128 is modified (phosphoserine). The segment at 215–472 is uroporphyrinogen-III C-methyltransferase; sequence GEVALVGAGP…AISPSVVNLA (258 aa). P224 contacts S-adenosyl-L-methionine. D247 functions as the Proton acceptor in the catalytic mechanism. The active-site Proton donor is K269. Residues 300-302, I305, 330-331, M382, and G411 contribute to the S-adenosyl-L-methionine site; these read GGD and TA.

It in the N-terminal section; belongs to the precorrin-2 dehydrogenase / sirohydrochlorin ferrochelatase family. In the C-terminal section; belongs to the precorrin methyltransferase family.

The enzyme catalyses uroporphyrinogen III + 2 S-adenosyl-L-methionine = precorrin-2 + 2 S-adenosyl-L-homocysteine + H(+). It catalyses the reaction precorrin-2 + NAD(+) = sirohydrochlorin + NADH + 2 H(+). It carries out the reaction siroheme + 2 H(+) = sirohydrochlorin + Fe(2+). Its pathway is cofactor biosynthesis; adenosylcobalamin biosynthesis; precorrin-2 from uroporphyrinogen III: step 1/1. The protein operates within cofactor biosynthesis; adenosylcobalamin biosynthesis; sirohydrochlorin from precorrin-2: step 1/1. It participates in porphyrin-containing compound metabolism; siroheme biosynthesis; precorrin-2 from uroporphyrinogen III: step 1/1. It functions in the pathway porphyrin-containing compound metabolism; siroheme biosynthesis; siroheme from sirohydrochlorin: step 1/1. Its pathway is porphyrin-containing compound metabolism; siroheme biosynthesis; sirohydrochlorin from precorrin-2: step 1/1. Functionally, multifunctional enzyme that catalyzes the SAM-dependent methylations of uroporphyrinogen III at position C-2 and C-7 to form precorrin-2 via precorrin-1. Then it catalyzes the NAD-dependent ring dehydrogenation of precorrin-2 to yield sirohydrochlorin. Finally, it catalyzes the ferrochelation of sirohydrochlorin to yield siroheme. This is Siroheme synthase 1 from Yersinia enterocolitica serotype O:8 / biotype 1B (strain NCTC 13174 / 8081).